Reading from the N-terminus, the 373-residue chain is UBX domain-containing protein 1 (373 aa).

Disordered regions lie at residues 39-179 (VTEF…QIPR) and 236-293 (IKQH…VDES). A compositionally biased stretch (polar residues) spans 49–59 (TAGSSEPTGQP). Low complexity-rich tracts occupy residues 60-71 (SAKSSSSTPRES) and 85-94 (LGDLASGAAD). Acidic residues predominate over residues 95 to 104 (SSDDDDDENQ). Residues 121–132 (DDLKKKIIEKAR) show a composition bias toward basic and acidic residues. The SEP domain maps to 185-258 (LHFWADGFSV…KYQPFAGKGQ (74 aa)). The UBX domain occupies 292-369 (ESQPVVTLQI…PEFKRGGVVV (78 aa)).

Its function is as follows. Involved in CDC48-dependent protein degradation through the ubiquitin/proteasome pathway. The chain is UBX domain-containing protein 1 (ubx1) from Emericella nidulans (strain FGSC A4 / ATCC 38163 / CBS 112.46 / NRRL 194 / M139) (Aspergillus nidulans).